Here is a 315-residue protein sequence, read N- to C-terminus: tRNA dimethylallyltransferase (315 aa).

14–21 (GPTASGKT) is an ATP binding site. 16 to 21 (TASGKT) provides a ligand contact to substrate. Interaction with substrate tRNA regions lie at residues 39–42 (DSAL), 163–167 (QRIQR), and 248–253 (RCVGYR).

Belongs to the IPP transferase family. Monomer. Requires Mg(2+) as cofactor.

It carries out the reaction adenosine(37) in tRNA + dimethylallyl diphosphate = N(6)-dimethylallyladenosine(37) in tRNA + diphosphate. Its function is as follows. Catalyzes the transfer of a dimethylallyl group onto the adenine at position 37 in tRNAs that read codons beginning with uridine, leading to the formation of N6-(dimethylallyl)adenosine (i(6)A). In Paraburkholderia phytofirmans (strain DSM 17436 / LMG 22146 / PsJN) (Burkholderia phytofirmans), this protein is tRNA dimethylallyltransferase.